Here is a 68-residue protein sequence, read N- to C-terminus: Phycobilisome 7.8 kDa linker polypeptide, allophycocyanin-associated, core (68 aa).

A CpcD-like domain is found at 2 to 57 (ARLFKVTACVPSQTRIRTQRELQNTYFTKLVPFENWFREQQRIMKMGGKIVKVELA).

It belongs to the phycobilisome linker protein family.

It is found in the cellular thylakoid membrane. In terms of biological role, rod linker protein, associated with allophycocyanin. Linker polypeptides determine the state of aggregation and the location of the disk-shaped phycobiliprotein units within the phycobilisome and modulate their spectroscopic properties in order to mediate a directed and optimal energy transfer. The protein is Phycobilisome 7.8 kDa linker polypeptide, allophycocyanin-associated, core (apcC) of Microchaete diplosiphon (Fremyella diplosiphon).